The following is a 206-amino-acid chain: Uracil phosphoribosyltransferase (206 aa).

5-phospho-alpha-D-ribose 1-diphosphate contacts are provided by residues Arg-76, Arg-101, and 128–136 (DPMLATGGS). Residues Ile-191 and 196-198 (GDA) each bind uracil. Asp-197 contributes to the 5-phospho-alpha-D-ribose 1-diphosphate binding site.

The protein belongs to the UPRTase family. The cofactor is Mg(2+).

The enzyme catalyses UMP + diphosphate = 5-phospho-alpha-D-ribose 1-diphosphate + uracil. It functions in the pathway pyrimidine metabolism; UMP biosynthesis via salvage pathway; UMP from uracil: step 1/1. Its activity is regulated as follows. Allosterically activated by GTP. In terms of biological role, catalyzes the conversion of uracil and 5-phospho-alpha-D-ribose 1-diphosphate (PRPP) to UMP and diphosphate. The sequence is that of Uracil phosphoribosyltransferase from Malacoplasma penetrans (strain HF-2) (Mycoplasma penetrans).